The chain runs to 677 residues: DNA-directed RNA polymerase subunit beta' (677 aa).

4 residues coordinate Zn(2+): Cys-69, Cys-71, Cys-87, and Cys-90. Mg(2+) is bound by residues Asp-489, Asp-491, and Asp-493.

Belongs to the RNA polymerase beta' chain family. RpoC1 subfamily. As to quaternary structure, in plastids the minimal PEP RNA polymerase catalytic core is composed of four subunits: alpha, beta, beta', and beta''. When a (nuclear-encoded) sigma factor is associated with the core the holoenzyme is formed, which can initiate transcription. Requires Mg(2+) as cofactor. It depends on Zn(2+) as a cofactor.

The protein resides in the plastid. The protein localises to the chloroplast. The catalysed reaction is RNA(n) + a ribonucleoside 5'-triphosphate = RNA(n+1) + diphosphate. Its function is as follows. DNA-dependent RNA polymerase catalyzes the transcription of DNA into RNA using the four ribonucleoside triphosphates as substrates. This chain is DNA-directed RNA polymerase subunit beta', found in Daucus carota (Wild carrot).